The sequence spans 753 residues: 5-methyltetrahydropteroyltriglutamate--homocysteine methyltransferase (753 aa).

5-methyltetrahydropteroyltri-L-glutamate-binding positions include 17–20 (RELK) and Lys-117. L-homocysteine is bound by residues 431 to 433 (IGS) and Glu-484. Residues 431–433 (IGS) and Glu-484 each bind L-methionine. 5-methyltetrahydropteroyltri-L-glutamate is bound by residues 515 to 516 (RC) and Trp-561. Residue Asp-599 participates in L-homocysteine binding. Residue Asp-599 coordinates L-methionine. Position 605 (Glu-605) interacts with 5-methyltetrahydropteroyltri-L-glutamate. His-641, Cys-643, and Glu-665 together coordinate Zn(2+). The Proton donor role is filled by His-694. Cys-726 contributes to the Zn(2+) binding site.

The protein belongs to the vitamin-B12 independent methionine synthase family. Zn(2+) is required as a cofactor.

It catalyses the reaction 5-methyltetrahydropteroyltri-L-glutamate + L-homocysteine = tetrahydropteroyltri-L-glutamate + L-methionine. The protein operates within amino-acid biosynthesis; L-methionine biosynthesis via de novo pathway; L-methionine from L-homocysteine (MetE route): step 1/1. In terms of biological role, catalyzes the transfer of a methyl group from 5-methyltetrahydrofolate to homocysteine resulting in methionine formation. This chain is 5-methyltetrahydropteroyltriglutamate--homocysteine methyltransferase, found in Escherichia coli O157:H7 (strain EC4115 / EHEC).